A 335-amino-acid polypeptide reads, in one-letter code: tRNA pseudouridine synthase D (335 aa).

Asp77 functions as the Nucleophile in the catalytic mechanism. The TRUD domain maps to 152–308 (GFPNYFTEQR…AQHLSWSFIP (157 aa)).

It belongs to the pseudouridine synthase TruD family.

It carries out the reaction uridine(13) in tRNA = pseudouridine(13) in tRNA. Responsible for synthesis of pseudouridine from uracil-13 in transfer RNAs. This chain is tRNA pseudouridine synthase D, found in Histophilus somni (strain 129Pt) (Haemophilus somnus).